The sequence spans 245 residues: Probable ABC transporter ATP-binding protein p29 (245 aa).

Residues 7–245 (LSFEKVSIIY…KEQLYKIYDN (239 aa)) form the ABC transporter domain. 39–46 (GKSGVGKS) is a binding site for ATP.

The protein belongs to the ABC transporter superfamily.

Its function is as follows. Part of a high-affinity transport system. The polypeptide is Probable ABC transporter ATP-binding protein p29 (p29) (Mycoplasma genitalium (strain ATCC 33530 / DSM 19775 / NCTC 10195 / G37) (Mycoplasmoides genitalium)).